The following is a 584-amino-acid chain: ATP synthase subunit alpha, mitochondrial (584 aa).

A mitochondrion-targeting transit peptide spans 1 to 24; sequence MRRFGSKFASGLASRCALACPLAS. Residues 207–214 and Gln464 each bind ATP; that span reads DRQTGKTS.

Belongs to the ATPase alpha/beta chains family. F-type ATPases have 2 components, F(1) - the catalytic core - and F(o) - the membrane proton channel. F(1) has five subunits: alpha(3), beta(3), gamma(1), delta(1), epsilon(1), plus the additional subunit P18 (Tb427.05.1710) that is not present in F(1)F(o) ATP synthase from metazoa. Subunit P18 (Tb927.5.1710) interacts with the alpha subunit with a 1:1 stoichiometry; the interaction is direct. Subunit gamma is part of the central stalk. F(o) has three main subunits: a, b and c. The trypanosomal ATPase complex contains additional subunits that are not present in the F(1)F(o) ATP synthase from metazoa.

Its subcellular location is the mitochondrion. It is found in the mitochondrion inner membrane. Mitochondrial membrane ATP synthase (F(1)F(o) ATP synthase) produces ATP from ADP in the presence of a proton gradient across the membrane which is generated by electron transport complexes of the respiratory chain. F-type ATPases consist of two structural domains, F(1) - containing the extramembraneous catalytic core, and F(o) - containing the membrane proton channel, linked together by a central stalk and a peripheral stalk. During catalysis, ATP synthesis in the catalytic domain of F(1) is coupled via a rotary mechanism of the central stalk subunits to proton translocation. Subunits alpha and beta form the catalytic core in F(1). Rotation of the central stalk against the surrounding alpha(3)beta(3) subunits leads to hydrolysis of ATP in three separate catalytic sites on the beta subunits. Subunit alpha does not bear the catalytic high-affinity ATP-binding sites. Contrary to the procyclic, insect form that requires F(1)F(o) ATP synthase for ATP synthesis, the bloodstream form relies on ATP hydrolysis by F(1)F(o) ATP synthase to maintain its mitochondrial membrane potential. This is ATP synthase subunit alpha, mitochondrial from Trypanosoma brucei brucei.